The primary structure comprises 164 residues: NADPH-dependent 7-cyano-7-deazaguanine reductase (164 aa).

Catalysis depends on cysteine 55, which acts as the Thioimide intermediate. Aspartate 62 serves as the catalytic Proton donor. Substrate-binding positions include 77 to 79 (VES) and 96 to 97 (HE).

Belongs to the GTP cyclohydrolase I family. QueF type 1 subfamily.

Its subcellular location is the cytoplasm. The catalysed reaction is 7-aminomethyl-7-carbaguanine + 2 NADP(+) = 7-cyano-7-deazaguanine + 2 NADPH + 3 H(+). The protein operates within tRNA modification; tRNA-queuosine biosynthesis. Catalyzes the NADPH-dependent reduction of 7-cyano-7-deazaguanine (preQ0) to 7-aminomethyl-7-deazaguanine (preQ1). In Bacillus velezensis (strain DSM 23117 / BGSC 10A6 / LMG 26770 / FZB42) (Bacillus amyloliquefaciens subsp. plantarum), this protein is NADPH-dependent 7-cyano-7-deazaguanine reductase.